Reading from the N-terminus, the 344-residue chain is Serine proteinase inhibitor 2 (344 aa).

Belongs to the serpin family. Poxviruses subfamily.

The protein resides in the host cytoplasm. Its function is as follows. Viral serpin that inhibits both cysteine and serine proteinases involved in the regulation of host inflammatory and apoptosis processes. Major anti-apoptotic protein which inhibits both intrinsic and extrinsic pathways and strongly cleaves host CASP1 and CASP8 but is a rather poor inhibitor of host CASP3. Prevents the proteolytic activity of host interleukin-1-beta converting enzyme (ICE) and ICE-like enzymes. Can also block apoptosis through host tumor necrosis factor (TNF) receptor. The inhibition of host ICE is an example of a 'cross-class' interaction, in which a serpin inhibits a non-serine proteinase. Also inhibits granzyme B. The sequence is that of Serine proteinase inhibitor 2 (OPG199) from Homo sapiens (Human).